We begin with the raw amino-acid sequence, 269 residues long: Protein OPG079 (269 aa).

This sequence belongs to the orthopoxvirus OPG079 family. As to quaternary structure, homoomultimer (Potential). Interacts with the small subunit of ribonucleotide reductase. Interacts with host FAM111A; this interaction protomtes OPG079 degradation through autophagy.

The protein resides in the host cytoplasm. Its function is as follows. Plays an essential role in viral DNA replication. Binds to ssDNA with high affinity and localizes to cytoplasmic factories where nascent viral genomes accumulate. May disrupt loops, hairpins and other secondary structures present on ssDNA to reduce and eliminate pausing of viral DNA polymerase at specific sites during elongation. The protein is Protein OPG079 (OPG079) of Variola virus (isolate Human/India/Ind3/1967) (VARV).